Here is a 333-residue protein sequence, read N- to C-terminus: MIDRQTNEPKQKTRIILAPMQGLVDDVMRDLLTRIGGYDECVSEFVRITHTVHSRSIWLKYVPEIANGNKTFSGTPCTVQLLGSDADNMAANALEAVRFGANKIDLNFGCPAPTVNKHKGGAILLKEPELIFHIVKTLRGRLPAHIPLTAKMRLGYEDKSRALECACAIAEGGACGLTVHARTKAEGYEPPAHWEWIRKIRDSVNIPVTANGDVFSLQDYIGIKTISGCNSVMLGRGAVIRPDLARQIKQYENGGPVKDTDFAEVSKWIRQFFELCLTKEANNKYPLARLKQWLGMMKKEFAAAQNLFDRVRTVKDADEVRNILAEFEREMNT.

Residues 19 to 21 and Gln80 each bind FMN; that span reads PMQ. The Proton donor role is filled by Cys110. FMN is bound by residues Lys151, 211–213, and 235–236; these read NGD and GR.

It belongs to the Dus family. DusC subfamily. It depends on FMN as a cofactor.

It carries out the reaction 5,6-dihydrouridine(16) in tRNA + NADP(+) = uridine(16) in tRNA + NADPH + H(+). The catalysed reaction is 5,6-dihydrouridine(16) in tRNA + NAD(+) = uridine(16) in tRNA + NADH + H(+). In terms of biological role, catalyzes the synthesis of 5,6-dihydrouridine (D), a modified base found in the D-loop of most tRNAs, via the reduction of the C5-C6 double bond in target uridines. Specifically modifies U16 in tRNAs. The sequence is that of tRNA-dihydrouridine(16) synthase from Neisseria meningitidis serogroup B (strain ATCC BAA-335 / MC58).